A 537-amino-acid chain; its full sequence is Methylmalonate-semialdehyde/malonate-semialdehyde dehydrogenase [acylating], mitochondrial (537 aa).

The transit peptide at 1-34 (MAAVAVAAAAAALRARILQVSSKVNSSWQPASSF) directs the protein to the mitochondrion. N6-acetyllysine; alternate occurs at positions 49, 54, 57, and 78. N6-succinyllysine; alternate occurs at positions 49, 54, 57, and 78. N6-acetyllysine is present on K89. Residues K119 and K131 each carry the N6-acetyllysine; alternate modification. K119 and K131 each carry N6-succinyllysine; alternate. The NAD(+) site is built by A185, F187, K211, E214, R215, and S264. S264 bears the Phosphoserine mark. The residue at position 300 (K300) is an N6-acetyllysine. Residue C319 is the Nucleophile of the active site. 2 positions are modified to N6-acetyllysine: K332 and K333. An N6-acetyllysine; alternate mark is found at K366 and K378. An N6-succinyllysine; alternate mark is found at K366 and K378. S382 carries the post-translational modification Phosphoserine. Residue K393 is modified to N6-succinyllysine. NAD(+) is bound at residue E419. At K502 the chain carries N6-acetyllysine. K519 is subject to N6-succinyllysine.

This sequence belongs to the aldehyde dehydrogenase family. As to quaternary structure, homodimer. In terms of processing, the N-terminus is blocked.

The protein localises to the mitochondrion. The enzyme catalyses 2-methyl-3-oxopropanoate + NAD(+) + CoA + H2O = propanoyl-CoA + hydrogencarbonate + NADH + H(+). The catalysed reaction is 3-oxopropanoate + NAD(+) + CoA + H2O = hydrogencarbonate + acetyl-CoA + NADH + H(+). It carries out the reaction (R)-2-methyl-3-oxopropanoate + NAD(+) + CoA + H2O = propanoyl-CoA + hydrogencarbonate + NADH + H(+). It catalyses the reaction (S)-2-methyl-3-oxopropanoate + NAD(+) + CoA + H2O = propanoyl-CoA + hydrogencarbonate + NADH + H(+). Functionally, malonate and methylmalonate semialdehyde dehydrogenase involved in the catabolism of valine, thymine, and compounds catabolized by way of beta-alanine, including uracil and cytidine. This is Methylmalonate-semialdehyde/malonate-semialdehyde dehydrogenase [acylating], mitochondrial (ALDH6A1) from Bos taurus (Bovine).